Reading from the N-terminus, the 425-residue chain is GTPase Obg (425 aa).

An Obg domain is found at 1–158; it reads MFVDQVKVYV…RYIVMELKLI (158 aa). The segment at 118 to 144 is disordered; that stretch reads KGGRGGRGNNRFANSSNPAPHISENGE. Residues 159 to 327 form the OBG-type G domain; the sequence is ADVGLVGYPS…LMYAIGDTLA (169 aa). ATP-binding positions include 165–172, 190–194, 211–214, 281–284, and 308–310; these read GYPSVGKS, FTTLT, DLPG, NKME, and SAA. Mg(2+)-binding residues include Ser-172 and Thr-192. In terms of domain architecture, OCT spans 348-425; it reads RAEKEPDAFE…IGKLEFDFVE (78 aa).

This sequence belongs to the TRAFAC class OBG-HflX-like GTPase superfamily. OBG GTPase family. Monomer. Mg(2+) is required as a cofactor.

It localises to the cytoplasm. Its function is as follows. An essential GTPase which binds GTP, GDP and possibly (p)ppGpp with moderate affinity, with high nucleotide exchange rates and a fairly low GTP hydrolysis rate. Plays a role in control of the cell cycle, stress response, ribosome biogenesis and in those bacteria that undergo differentiation, in morphogenesis control. The chain is GTPase Obg from Brevibacillus brevis (strain 47 / JCM 6285 / NBRC 100599).